A 317-amino-acid polypeptide reads, in one-letter code: Protoheme IX farnesyltransferase (317 aa).

The next 9 membrane-spanning stretches (helical) occupy residues 28–48, 53–73, 101–121, 122–142, 150–170, 178–198, 223–243, 246–266, and 282–302; these read IIPL…HGHI, LLIT…LNCI, LIFA…FVNL, LSAC…THWL, IVIG…AVTG, ILFA…ALMI, IWIY…PFQA, LFYA…AWEL, and YSIL…LPAV.

This sequence belongs to the UbiA prenyltransferase family. Protoheme IX farnesyltransferase subfamily.

It localises to the cell inner membrane. It carries out the reaction heme b + (2E,6E)-farnesyl diphosphate + H2O = Fe(II)-heme o + diphosphate. Its pathway is porphyrin-containing compound metabolism; heme O biosynthesis; heme O from protoheme: step 1/1. In terms of biological role, converts heme B (protoheme IX) to heme O by substitution of the vinyl group on carbon 2 of heme B porphyrin ring with a hydroxyethyl farnesyl side group. The protein is Protoheme IX farnesyltransferase of Picosynechococcus sp. (strain ATCC 27264 / PCC 7002 / PR-6) (Agmenellum quadruplicatum).